We begin with the raw amino-acid sequence, 277 residues long: Tryptophan synthase alpha chain (277 aa).

Catalysis depends on proton acceptor residues glutamate 59 and aspartate 70.

This sequence belongs to the TrpA family. Tetramer of two alpha and two beta chains.

It carries out the reaction (1S,2R)-1-C-(indol-3-yl)glycerol 3-phosphate + L-serine = D-glyceraldehyde 3-phosphate + L-tryptophan + H2O. Its pathway is amino-acid biosynthesis; L-tryptophan biosynthesis; L-tryptophan from chorismate: step 5/5. Its function is as follows. The alpha subunit is responsible for the aldol cleavage of indoleglycerol phosphate to indole and glyceraldehyde 3-phosphate. The polypeptide is Tryptophan synthase alpha chain (Streptomyces avermitilis (strain ATCC 31267 / DSM 46492 / JCM 5070 / NBRC 14893 / NCIMB 12804 / NRRL 8165 / MA-4680)).